Reading from the N-terminus, the 429-residue chain is FAD-dependent monooxygenase azaH (429 aa).

A helical transmembrane segment spans residues 5–25 (SIEVAIIGAGITGITLALGLL). The FAD site is built by E35 and G48. Residues N75 and N87 are each glycosylated (N-linked (GlcNAc...) asparagine). R116 provides a ligand contact to FAD. R199 is a catalytic residue. FAD-binding residues include D315 and A328.

The protein belongs to the paxM FAD-dependent monooxygenase family. It depends on FAD as a cofactor.

The protein resides in the membrane. Its pathway is secondary metabolite biosynthesis. Its function is as follows. FAD-dependent monooxygenase; part of the gene cluster that mediates the biosynthesis of azaphilones, a class of fungal metabolites characterized by a highly oxygenated pyrano-quinone bicyclic core and exhibiting a broad range of bioactivities. In the first step, the non-reducing polyketide synthase azaA forms the hexaketide precursor from successive condensations of five malonyl-CoA units, presumably with a simple acetyl-CoA starter unit. The reactive polyketide chain then undergoes a PT-mediated C2-C7 cyclization to afford the aromatic ring and is eventually released as an aldehyde through the R-domain. The putative ketoreductase azaE is proposed to catalyze the reduction of the terminal ketone resulting in the early culture product FK17-P2a. The monooxygenase azaH was demonstrated to be the only enzyme required to convert FK17-P2a to azanigerone E. AzaH first hydroxylates the benzaldehyde intermediate FK17-P2a at C4, which triggers the formation of the pyran-ring to afford azanigerone E. In parallel, the 2,4-dimethylhexanoyl chain is synthesized by the HR-PKS azaB and is proposed to be transferred to the C4-hydroxyl of azanigerone E by the acyltransferase azaD directly from the ACP domain of azaB. Alternatively, the 2,4-dimethyl-hexanoyl chain may be offloaded from the HR-PKS as a carboxylic acid and converted to an acyl-CoA by azaF. The resulting acyl-CoA molecule could then be taken up as a substrate by AzaD to form azanigerone B. To yield the carboxylic acid substituent in azanigerone A, the hydroxypropyl side chain of azanigerone B would need to undergo a C-C oxidative cleavage catalyzed by cytochrome P450 AzaI. AzaI is proposed to act on a vicinal diol that leads to a C-C bond scission either through an alkoxyradical intermediate or a peroxy complex. In the biosynthesis of azanigerone A, azanigerone B first undergoes hydroxylation at C10, possibly catalyzed by one of the two FAD-dependent monooxygenases encoded in the cluster, azaG or azaL, resulting in the vicinal diol azanigerone C. Oxidative cleavage of azanigerone C by azaI would yield the corresponding aldehyde derivative of azanigerone A. Finally, the dehydrogenase azaJ is proposed to convert the aldehyde functional group into the carboxylic acid, completing the conversion from azanigerone B to azanigerone A. Alternatively, the oxidation of aldehyde to carboxylic acid may be catalyzed by the same P450 enzyme azaI via consecutive oxidation or by endogenous alcohol dehydrogenase. The chain is FAD-dependent monooxygenase azaH from Aspergillus niger (strain ATCC 1015 / CBS 113.46 / FGSC A1144 / LSHB Ac4 / NCTC 3858a / NRRL 328 / USDA 3528.7).